Reading from the N-terminus, the 68-residue chain is Purkinje cell protein 4-like protein 1 (68 aa).

Polar residues predominate over residues 1-16; sequence MSELNTKTSPATNQAA. The disordered stretch occupies residues 1–45; that stretch reads MSELNTKTSPATNQAAGQEEKGKAGNVKKAEEEEEIDIDLTAPET. Threonine 8 carries the phosphothreonine modification. A compositionally biased stretch (basic and acidic residues) spans 18–31; it reads QEEKGKAGNVKKAE. The region spanning 45–68 is the IQ domain; sequence TEKAALAIQGKFRRFQKRKKDPSS.

The protein belongs to the PCP4 family.

The polypeptide is Purkinje cell protein 4-like protein 1 (PCP4L1) (Homo sapiens (Human)).